The chain runs to 114 residues: Ig heavy chain V region (114 aa).

Residues 1–106 (EVQLQQSGAE…AVRVISRYFD (106 aa)) form the Ig-like domain.

This Mus musculus (Mouse) protein is Ig heavy chain V region.